We begin with the raw amino-acid sequence, 193 residues long: Probable gluconokinase (193 aa).

Position 18-25 (18-25 (GTAGTGKS)) interacts with ATP.

It belongs to the gluconokinase GntK/GntV family.

The protein resides in the cytoplasm. The enzyme catalyses D-gluconate + ATP = 6-phospho-D-gluconate + ADP + H(+). The protein operates within carbohydrate acid metabolism; D-gluconate degradation. The protein is Probable gluconokinase of Saccharomyces cerevisiae (strain ATCC 204508 / S288c) (Baker's yeast).